We begin with the raw amino-acid sequence, 165 residues long: Putative pre-16S rRNA nuclease (165 aa).

This sequence belongs to the YqgF nuclease family.

It is found in the cytoplasm. Its function is as follows. Could be a nuclease involved in processing of the 5'-end of pre-16S rRNA. The protein is Putative pre-16S rRNA nuclease of Rhizobium meliloti (strain 1021) (Ensifer meliloti).